We begin with the raw amino-acid sequence, 335 residues long: Large ribosomal subunit protein uL3 (335 aa).

A disordered region spans residues 1–20 (MATIHRPRRGSLAFSPRKRA).

Belongs to the universal ribosomal protein uL3 family. As to quaternary structure, part of the 50S ribosomal subunit. Forms a cluster with proteins L14 and L24e.

Functionally, one of the primary rRNA binding proteins, it binds directly near the 3'-end of the 23S rRNA, where it nucleates assembly of the 50S subunit. The protein is Large ribosomal subunit protein uL3 (rpl3) of Methanothrix harundinacea (strain 6Ac) (Methanosaeta harundinacea).